The chain runs to 432 residues: Serine--tRNA ligase (432 aa).

An L-serine-binding site is contributed by 238–240 (TAE). Residue 269–271 (RSE) participates in ATP binding. Residue E292 participates in L-serine binding. 356–359 (EVSS) is an ATP binding site. An L-serine-binding site is contributed by S392.

Belongs to the class-II aminoacyl-tRNA synthetase family. Type-1 seryl-tRNA synthetase subfamily. In terms of assembly, homodimer. The tRNA molecule binds across the dimer.

The protein localises to the cytoplasm. The enzyme catalyses tRNA(Ser) + L-serine + ATP = L-seryl-tRNA(Ser) + AMP + diphosphate + H(+). It carries out the reaction tRNA(Sec) + L-serine + ATP = L-seryl-tRNA(Sec) + AMP + diphosphate + H(+). The protein operates within aminoacyl-tRNA biosynthesis; selenocysteinyl-tRNA(Sec) biosynthesis; L-seryl-tRNA(Sec) from L-serine and tRNA(Sec): step 1/1. Functionally, catalyzes the attachment of serine to tRNA(Ser). Is also able to aminoacylate tRNA(Sec) with serine, to form the misacylated tRNA L-seryl-tRNA(Sec), which will be further converted into selenocysteinyl-tRNA(Sec). The polypeptide is Serine--tRNA ligase (Buchnera aphidicola subsp. Baizongia pistaciae (strain Bp)).